A 718-amino-acid polypeptide reads, in one-letter code: Exostosin-2 (718 aa).

Topologically, residues 1–25 are cytoplasmic; sequence MCASVKYNIRGPALIPRMKTKHRIY. A helical; Signal-anchor for type II membrane protein transmembrane segment spans residues 26–46; sequence YITLFSIVLLGLIATGMFQFW. Over 47–718 the chain is Lumenal; the sequence is PHSIESSNDW…LKSFPNIGSL (672 aa). Disulfide bonds link C85–C90, C96–C151, C286–C300, and C318–C339. An N-linked (GlcNAc...) asparagine glycan is attached at N288. UDP-binding residues include L461, R465, N490, and N517. R465, N490, N517, R522, D538, D539, and D540 together coordinate UDP-N-acetyl-alpha-D-glucosamine. UDP is bound by residues D538 and D539. D540 provides a ligand contact to Mn(2+). Positions 582 and 584 each coordinate a protein. The cysteines at positions 626 and 676 are disulfide-linked. UDP-N-acetyl-alpha-D-glucosamine-binding residues include E627 and D628. An N-linked (GlcNAc...) asparagine glycan is attached at N637. K651 and K653 together coordinate a protein. R673 is a UDP-N-acetyl-alpha-D-glucosamine binding site.

This sequence belongs to the glycosyltransferase 47 family. Part of the heparan sulfate polymerase, a dimeric complex composed of EXT1 and EXT2. Could also form homooligomeric complexes. Interacts with NDST1. Interacts with GALNT5. Mn(2+) serves as cofactor. Post-translationally, N-glycosylated at Asn-637. In terms of processing, a soluble form is generated by proteolytic processing. In terms of tissue distribution, widely expressed.

The protein localises to the golgi apparatus membrane. It localises to the golgi apparatus. The protein resides in the cis-Golgi network membrane. It is found in the endoplasmic reticulum membrane. Its subcellular location is the secreted. The enzyme catalyses 3-O-{[(1-&gt;4)-beta-D-GlcA-(1-&gt;4)-alpha-D-GlcNAc](n)-(1-&gt;4)-beta-D-GlcA-(1-&gt;3)-beta-D-Gal-(1-&gt;3)-beta-D-Gal-(1-&gt;4)-beta-D-Xyl}-L-seryl-[protein] + UDP-N-acetyl-alpha-D-glucosamine = 3-O-{alpha-D-GlcNAc-[(1-&gt;4)-beta-D-GlcA-(1-&gt;4)-alpha-D-GlcNAc](n)-(1-&gt;4)-beta-D-GlcA-(1-&gt;3)-beta-D-Gal-(1-&gt;3)-beta-D-Gal-(1-&gt;4)-beta-D-Xyl}-L-seryl-[protein] + UDP + H(+). It participates in protein modification; protein glycosylation. Its function is as follows. Glycosyltransferase forming with EXT1 the heterodimeric heparan sulfate polymerase which catalyzes the elongation of the heparan sulfate glycan backbone. Glycan backbone extension consists in the alternating transfer of (1-&gt;4)-beta-D-GlcA and (1-&gt;4)-alpha-D-GlcNAc residues from their respective UDP-sugar donors. Both EXT1 and EXT2 are required for the full activity of the polymerase since EXT1 bears the N-acetylglucosaminyl-proteoglycan 4-beta-glucuronosyltransferase activity within the complex while EXT2 carries the glucuronosyl-N-acetylglucosaminyl-proteoglycan 4-alpha-N-acetylglucosaminyltransferase activity. Heparan sulfate proteoglycans are ubiquitous components of the extracellular matrix and play an important role in tissue homeostasis and signaling. This chain is Exostosin-2, found in Homo sapiens (Human).